The chain runs to 697 residues: MSKINKLEHIRNIGICAHIDAGKTTTTERILYYTGKSHKIGEVHEGGATMDWMEQEQERGITITSAATTCRWQDKIINIIDTPGHVDFTIEVERSLRVLDGAVAVLDGVAGVEPQSETVWRQADKYNVPRMCFVNKMDRMGADFYRCVEMLKDRLGAKPLVIQLPVGIEENFKGIIDLVKMKVVIWKDEALGAEYFEEDIPADMKDKAEEYHAKLLDMVVELDDHVMEKYLSGEEVTAEEIKRLISKGTISAAFYPVLCGSAFKNKGVQPLLDAVVDFLPSPTDIGIVKGMEVSTGEEKDFPISELEPFAALAFKIMNDPFVGSLTFIRIYSGKITSGTTVINTVKNKREKIGRMLLMHSNNREDVKEASAGDIVALAGLKDTTTGDTLSDIDQQVILEKMEFPEPVIELAVEPKSTADQEKMGLALSRLAAEDPSFRVSTDHETGQTVIKGMGELHLEIIIDRMRREFKVEANIGAPQVAYRETITKACEIDYTHKKQSGGAGQFARVKIIFEPLKDVKDLKDEDKIFVFESKIIGGAVPKEYIPGVEKGLNNIRETGVIAGYPMIDFKATLVDGAFHDVDSSVLAFEIAAKAAFREGMPKGNPKLLEPIMQVEVITPDEYMGDIIGDLNSRRGQIQSMDPRGNAQVVTANVPLAEMFGYVNTLRSLSQGRAQFSMIFSHYDQVPSQVADIIKAKK.

One can recognise a tr-type G domain in the interval 8 to 283 (EHIRNIGICA…AVVDFLPSPT (276 aa)). Residues 17-24 (AHIDAGKT), 81-85 (DTPGH), and 135-138 (NKMD) contribute to the GTP site.

The protein belongs to the TRAFAC class translation factor GTPase superfamily. Classic translation factor GTPase family. EF-G/EF-2 subfamily.

Its subcellular location is the cytoplasm. Catalyzes the GTP-dependent ribosomal translocation step during translation elongation. During this step, the ribosome changes from the pre-translocational (PRE) to the post-translocational (POST) state as the newly formed A-site-bound peptidyl-tRNA and P-site-bound deacylated tRNA move to the P and E sites, respectively. Catalyzes the coordinated movement of the two tRNA molecules, the mRNA and conformational changes in the ribosome. The protein is Elongation factor G of Rickettsia rhipicephali.